The sequence spans 83 residues: Exodeoxyribonuclease 7 small subunit (83 aa).

Belongs to the XseB family. Heterooligomer composed of large and small subunits.

Its subcellular location is the cytoplasm. It carries out the reaction Exonucleolytic cleavage in either 5'- to 3'- or 3'- to 5'-direction to yield nucleoside 5'-phosphates.. Functionally, bidirectionally degrades single-stranded DNA into large acid-insoluble oligonucleotides, which are then degraded further into small acid-soluble oligonucleotides. The sequence is that of Exodeoxyribonuclease 7 small subunit from Bradyrhizobium sp. (strain ORS 278).